A 382-amino-acid chain; its full sequence is Heme A synthase (382 aa).

Transmembrane regions (helical) follow at residues 37–57 (IRVW…VGGL), 126–146 (VIGV…QVPA), 152–172 (LLFL…MVAS), 188–208 (LATH…YIME), 231–251 (STGL…VAGI), 288–308 (LVQF…VVVW), and 332–352 (LQIV…IAIF). Residue histidine 293 coordinates heme. Residue histidine 353 coordinates heme. Residues 356-376 (LAVIVWVLILRARFLSGYPIA) traverse the membrane as a helical segment.

This sequence belongs to the COX15/CtaA family. Type 2 subfamily. In terms of assembly, interacts with CtaB. Heme b serves as cofactor.

Its subcellular location is the cell membrane. The catalysed reaction is Fe(II)-heme o + 2 A + H2O = Fe(II)-heme a + 2 AH2. Its pathway is porphyrin-containing compound metabolism; heme A biosynthesis; heme A from heme O: step 1/1. Catalyzes the conversion of heme O to heme A by two successive hydroxylations of the methyl group at C8. The first hydroxylation forms heme I, the second hydroxylation results in an unstable dihydroxymethyl group, which spontaneously dehydrates, resulting in the formyl group of heme A. The protein is Heme A synthase of Roseobacter denitrificans (strain ATCC 33942 / OCh 114) (Erythrobacter sp. (strain OCh 114)).